Consider the following 674-residue polypeptide: uncharacterized protein (674 aa).

Positions 1–24 are cleaved as a signal peptide; the sequence is MKTLKALKIFIIVYISSVSLESFA. The next 2 membrane-spanning stretches (helical) occupy residues 226–246 and 254–274; these read IIGAALILYTMFFAFNMALNK and ITLFIIKFLFVVYFSIGLEPL. The segment at 363-384 is disordered; that stretch reads GNGPGGNNKPIPNFDPDSKKDR. The next 4 helical transmembrane spans lie at 409 to 429, 436 to 456, 469 to 489, and 562 to 582; these read IIILVAGIAFSVIFLSILLYF, CMITIYVMTYISPIFIPMVLF, VCISCALQPAVVAGFIALLIT, and VVSILAELLCVLVFSVIFYYF. The tract at residues 624–674 is disordered; sequence SSVHAQGKSPVEDKPDIGSKRKDGVQQGEDSENSSGGELADLASGSGGGKL. Residues 633-647 show a composition bias toward basic and acidic residues; the sequence is PVEDKPDIGSKRKDG.

The protein belongs to the TrbL/VirB6 family.

It is found in the cell membrane. This is an uncharacterized protein from Rickettsia typhi (strain ATCC VR-144 / Wilmington).